Here is a 240-residue protein sequence, read N- to C-terminus: 2,3,4,5-tetrahydropyridine-2,6-dicarboxylate N-acetyltransferase (240 aa).

Belongs to the transferase hexapeptide repeat family. DapH subfamily.

The enzyme catalyses (S)-2,3,4,5-tetrahydrodipicolinate + acetyl-CoA + H2O = L-2-acetamido-6-oxoheptanedioate + CoA. It functions in the pathway amino-acid biosynthesis; L-lysine biosynthesis via DAP pathway; LL-2,6-diaminopimelate from (S)-tetrahydrodipicolinate (acetylase route): step 1/3. Catalyzes the transfer of an acetyl group from acetyl-CoA to tetrahydrodipicolinate. In Staphylococcus epidermidis (strain ATCC 12228 / FDA PCI 1200), this protein is 2,3,4,5-tetrahydropyridine-2,6-dicarboxylate N-acetyltransferase.